Reading from the N-terminus, the 124-residue chain is NADH dehydrogenase [ubiquinone] 1 alpha subcomplex subunit 6 (124 aa).

This sequence belongs to the complex I LYR family.

Its subcellular location is the mitochondrion inner membrane. Functionally, accessory subunit of the mitochondrial membrane respiratory chain NADH dehydrogenase (Complex I), that is believed to be not involved in catalysis. Complex I functions in the transfer of electrons from NADH to the respiratory chain. The immediate electron acceptor for the enzyme is believed to be ubiquinone. This Dictyostelium discoideum (Social amoeba) protein is NADH dehydrogenase [ubiquinone] 1 alpha subcomplex subunit 6 (ndufa6).